We begin with the raw amino-acid sequence, 61 residues long: Sec-independent protein translocase protein TatA (61 aa).

Residues 1–21 traverse the membrane as a helical segment; sequence MFGIGMPEMLIILVIILIIFG.

Belongs to the TatA/E family. In terms of assembly, the Tat system comprises two distinct complexes: a TatABC complex, containing multiple copies of TatA, TatB and TatC subunits, and a separate TatA complex, containing only TatA subunits. Substrates initially bind to the TatABC complex, which probably triggers association of the separate TatA complex to form the active translocon.

Its subcellular location is the cell inner membrane. Functionally, part of the twin-arginine translocation (Tat) system that transports large folded proteins containing a characteristic twin-arginine motif in their signal peptide across membranes. TatA could form the protein-conducting channel of the Tat system. The chain is Sec-independent protein translocase protein TatA from Syntrophus aciditrophicus (strain SB).